The sequence spans 447 residues: Large ribosomal subunit protein bL27m (447 aa).

Basic and acidic residues-rich tracts occupy residues 377–402 (QREA…KAEK) and 409–447 (KVEK…EKKD). A disordered region spans residues 377–447 (QREAKKAREG…KKDSKTEKKD (71 aa)).

Belongs to the bacterial ribosomal protein bL27 family. Component of the mitochondrial large ribosomal subunit (mt-LSU). Mature N.crassa 74S mitochondrial ribosomes consist of a small (37S) and a large (54S) subunit. The 37S small subunit contains a 16S ribosomal RNA (16S mt-rRNA) and 32 different proteins. The 54S large subunit contains a 23S rRNA (23S mt-rRNA) and 42 different proteins.

The protein localises to the mitochondrion. Its function is as follows. Component of the mitochondrial ribosome (mitoribosome), a dedicated translation machinery responsible for the synthesis of mitochondrial genome-encoded proteins, including at least some of the essential transmembrane subunits of the mitochondrial respiratory chain. The mitoribosomes are attached to the mitochondrial inner membrane and translation products are cotranslationally integrated into the membrane. This is Large ribosomal subunit protein bL27m (mrp7) from Neurospora crassa (strain ATCC 24698 / 74-OR23-1A / CBS 708.71 / DSM 1257 / FGSC 987).